Here is a 77-residue protein sequence, read N- to C-terminus: TSC22 domain family protein 3 (77 aa).

An N-acetylmethionine modification is found at Met1. Residues 19–40 (LKEQIRELVEKNSQLERENTLL) are leucine-zipper. The interval 41-77 (KTLASPEQLEKFQSRLSPEEPAPETPEAPEAPGGSAV) is disordered. Residue Ser45 is modified to Phosphoserine. Positions 68-77 (APEAPGGSAV) are enriched in low complexity.

Belongs to the TSC-22/Dip/Bun family. As to quaternary structure, can form homodimers, however it is likely to function as a monomer. Interacts with AP1 and NFKB1. Interacts with MYOD1. Interacts with HDAC1; this interaction affects HDAC1 activity on MYOG promoter and thus inhibits MYOD1 transcriptional activity.

It localises to the cytoplasm. Its subcellular location is the nucleus. Protects T-cells from IL2 deprivation-induced apoptosis through the inhibition of FOXO3A transcriptional activity that leads to the down-regulation of the pro-apoptotic factor BCL2L11. In macrophages, plays a role in the anti-inflammatory and immunosuppressive effects of glucocorticoids and IL10. In T-cells, inhibits anti-CD3-induced NFKB1 nuclear translocation. In vitro, suppresses AP1 and NFKB1 DNA-binding activities. Inhibits myogenic differentiation and mediates anti-myogenic effects of glucocorticoids by binding and regulating MYOD1 and HDAC1 transcriptional activity resulting in reduced expression of MYOG. In Sus scrofa (Pig), this protein is TSC22 domain family protein 3 (TSC22D3).